We begin with the raw amino-acid sequence, 382 residues long: Cell division protein FtsZ (382 aa).

Residues glycine 21–asparagine 25, glycine 108–glycine 110, glutamate 139, arginine 143, and aspartate 187 each bind GTP. A disordered region spans residues lysine 320–glycine 382. Over residues glutamine 326 to valine 341 the composition is skewed to polar residues. The segment covering proline 342–proline 351 has biased composition (basic and acidic residues). The segment covering glutamine 352–alanine 365 has biased composition (polar residues).

This sequence belongs to the FtsZ family. Homodimer. Polymerizes to form a dynamic ring structure in a strictly GTP-dependent manner. Interacts directly with several other division proteins. Interacts with FtsA. Interacts with Phi29 DNA replication protein 1. Interacts with the cell division inhibitor MciZ.

It is found in the cytoplasm. Its activity is regulated as follows. During sporulation, is negatively regulated by MciZ, which binds to FtsZ and inhibits its polymerization and the formation of the Z ring. Functionally, essential cell division protein that forms a contractile ring structure (Z ring) at the future cell division site. The regulation of the ring assembly controls the timing and the location of cell division. One of the functions of the FtsZ ring is to recruit other cell division proteins to the septum to produce a new cell wall between the dividing cells. Binds GTP and shows GTPase activity. The sequence is that of Cell division protein FtsZ from Bacillus subtilis (strain 168).